We begin with the raw amino-acid sequence, 215 residues long: Cytochrome b6 (215 aa).

Residues 32–52 (IFYCLGGITLTCFLIQFATGF) form a helical membrane-spanning segment. Cysteine 35 is a binding site for heme c. The heme b site is built by histidine 86 and histidine 100. A run of 3 helical transmembrane segments spans residues 90–110 (ASMM…TGGF), 116–136 (LTWV…VTGY), and 186–206 (AHTF…FLMI). The heme b site is built by histidine 187 and histidine 202.

This sequence belongs to the cytochrome b family. PetB subfamily. The 4 large subunits of the cytochrome b6-f complex are cytochrome b6, subunit IV (17 kDa polypeptide, PetD), cytochrome f and the Rieske protein, while the 4 small subunits are PetG, PetL, PetM and PetN. The complex functions as a dimer. The cofactor is heme b. Requires heme c as cofactor.

It is found in the cellular thylakoid membrane. Component of the cytochrome b6-f complex, which mediates electron transfer between photosystem II (PSII) and photosystem I (PSI), cyclic electron flow around PSI, and state transitions. This chain is Cytochrome b6, found in Desmonostoc sp. (strain PCC 7906) (Nostoc sp. (strain PCC 7906)).